The chain runs to 635 residues: Sodium- and chloride-dependent transporter XTRP3B (635 aa).

A disordered region spans residues 1–38 (MESPSAHAVSLPEDEELQPWGGAGGPGQHPGRPRSTEC). Over 1 to 56 (MESPSAHAVSLPEDEELQPWGGAGGPGQHPGRPRSTECAHPGVVEKVRPKWDNPLQ) the chain is Cytoplasmic. Residues 57-77 (FLLVCISYAVGLGNVWRFPYL) traverse the membrane as a helical segment. Residues 78-85 (CQMYGGGN) lie on the Extracellular side of the membrane. A helical membrane pass occupies residues 86 to 106 (FLVPYIIMLIVEGMPLLYLEL). The Cytoplasmic segment spans residues 107–127 (AVGQRMRQGSIGAWRTISPYL). The helical transmembrane segment at 128–148 (SGVGIASLVVSFLASVYFNVI) threads the bilayer. Topologically, residues 149–208 (NTWALWYLFHSFQDPLPWSVCPLNSNHTGYDEECEKASSTQYFWYRKTLNISPSIQENGG) are extracellular. N-linked (GlcNAc...) asparagine glycosylation is present at N174. A helical membrane pass occupies residues 209-229 (VQWEPALCLTLAWLMVYLCIL). The Cytoplasmic portion of the chain corresponds to 230–237 (RGTESTGK). A helical transmembrane segment spans residues 238-258 (VVYFTTSLPYFVLIIYLVRGL). Over 259 to 284 (TLHGATNGLAYMFTPKIEQLANPKAW) the chain is Extracellular. The helical transmembrane segment at 285–305 (INAATQIFFSLGLGCGGLIAF) threads the bilayer. Topologically, residues 306-319 (ASYNEPSNDCQKHA) are cytoplasmic. The chain crosses the membrane as a helical span at residues 320-340 (LIVSVINSTTAIFSSIVTFSI). Topologically, residues 341–432 (YGFKATFNYE…EAIKNMEVSQ (92 aa)) are extracellular. The N-linked (GlcNAc...) asparagine glycan is linked to N400. A helical membrane pass occupies residues 433 to 453 (LWSVLYFFMLLTLGMGSMVGT). Topologically, residues 454 to 474 (GTAILTPLTDSKIISSYLPKE) are cytoplasmic. Residues 475–495 (AISGLVCLLNCAIGMVFTMEA) traverse the membrane as a helical segment. The Extracellular portion of the chain corresponds to 496–508 (GNYWFDLFNDYTA). The chain crosses the membrane as a helical span at residues 509–529 (TLSLLLIVLVETIAVCYVYGL). Topologically, residues 530–547 (KRFESDLRAMTGRTLSWY) are cytoplasmic. The helical transmembrane segment at 548-568 (WKVMWAFVSPLLIVGLFIFYL) threads the bilayer. Residues 569 to 597 (SDYILTGTLQYQAWDATQGHVVTKDYPTY) are Extracellular-facing. Residues 598–618 (ALAVIGLLVASSTMCIPLVAL) form a helical membrane-spanning segment. The Cytoplasmic portion of the chain corresponds to 619–635 (GTFVTRHFKIREQFSAA).

It belongs to the sodium:neurotransmitter symporter (SNF) (TC 2.A.22) family. SLC6A20 subfamily. In terms of assembly, interacts with CLTRN. As to expression, detected only in kidney and lung.

It is found in the apical cell membrane. Functionally, does not show transporter activity with a range of tested amino acids including proline, glutamine, glutamic acid, leucine, alanine, histidine, glycine and arginine. This is Sodium- and chloride-dependent transporter XTRP3B (Slc6a20b) from Mus musculus (Mouse).